A 474-amino-acid polypeptide reads, in one-letter code: PRAME family member 10 (474 aa).

Residues 97-124 form an LRR 1; degenerate repeat; it reads RWKLQVLDLRDVDENFWTIWSGARVLSC. The stretch at 179–203 is one LRR 2; degenerate repeat; the sequence is HLCCSKVQNYSMPTSSFRNLLERIY. One copy of the LRR 3; degenerate repeat lies at 204–230; sequence PDSIQELEVWKKCSLNKTGKFAPYLSQ. The stretch at 231 to 265 is one LRR 4; degenerate repeat; that stretch reads MSNLRELFLAFGYERELYVSVQWPCIPDLDSPFLC. LRR repeat units lie at residues 266-291, 292-323, 324-342, 348-375, and 376-400; these read LYYP…LRYL, KNPL…SQLK, ELRL…PLGV, AATL…ALSH, and CSQL…LLRH.

The protein belongs to the PRAME family.

The chain is PRAME family member 10 from Homo sapiens (Human).